The chain runs to 465 residues: Glutamate--tRNA ligase 1 (465 aa).

The short motif at 8-18 (PSPTGNLHIGG) is the 'HIGH' region element. The 'KMSKS' region signature appears at 236-240 (KLSKR). ATP is bound at residue Lys-239.

This sequence belongs to the class-I aminoacyl-tRNA synthetase family. Glutamate--tRNA ligase type 1 subfamily. In terms of assembly, monomer.

It localises to the cytoplasm. The catalysed reaction is tRNA(Glu) + L-glutamate + ATP = L-glutamyl-tRNA(Glu) + AMP + diphosphate. In terms of biological role, catalyzes the attachment of glutamate to tRNA(Glu) in a two-step reaction: glutamate is first activated by ATP to form Glu-AMP and then transferred to the acceptor end of tRNA(Glu). The protein is Glutamate--tRNA ligase 1 of Wolinella succinogenes (strain ATCC 29543 / DSM 1740 / CCUG 13145 / JCM 31913 / LMG 7466 / NCTC 11488 / FDC 602W) (Vibrio succinogenes).